The primary structure comprises 386 residues: Succinate--CoA ligase [ADP-forming] subunit beta (386 aa).

An ATP-grasp domain is found at 9-244; it reads KAVLRSYGVS…LDEEDSKEIE (236 aa). Residues K46, 53-55, E99, C102, and E107 each bind ATP; that span reads GRG. Residues N199 and D213 each contribute to the Mg(2+) site. Residues N264 and 321–323 contribute to the substrate site; that span reads GIM.

It belongs to the succinate/malate CoA ligase beta subunit family. Heterotetramer of two alpha and two beta subunits. Mg(2+) is required as a cofactor.

It carries out the reaction succinate + ATP + CoA = succinyl-CoA + ADP + phosphate. The enzyme catalyses GTP + succinate + CoA = succinyl-CoA + GDP + phosphate. Its pathway is carbohydrate metabolism; tricarboxylic acid cycle; succinate from succinyl-CoA (ligase route): step 1/1. Functionally, succinyl-CoA synthetase functions in the citric acid cycle (TCA), coupling the hydrolysis of succinyl-CoA to the synthesis of either ATP or GTP and thus represents the only step of substrate-level phosphorylation in the TCA. The beta subunit provides nucleotide specificity of the enzyme and binds the substrate succinate, while the binding sites for coenzyme A and phosphate are found in the alpha subunit. The polypeptide is Succinate--CoA ligase [ADP-forming] subunit beta (Bacillus cereus (strain G9842)).